The following is a 254-amino-acid chain: Cytochrome c oxidase subunit 2 (254 aa).

Residues 12-38 (DAPEPWQICYQDSATKIMSGIDKLTGE) lie on the Mitochondrial intermembrane side of the membrane. Residues 39 to 59 (IFYYETLLLIIVGWVLISAII) form a helical membrane-spanning segment. The Mitochondrial matrix segment spans residues 60-73 (KYTKTELSYKYFNH). A helical membrane pass occupies residues 74–94 (GTLIEILWTCSPAFILIAISF). Residues 95–248 (PSFKLLYLMD…KYLEWLNIHL (154 aa)) are Mitochondrial intermembrane-facing. Residues H182, C217, E219, C221, H225, and M228 each coordinate Cu cation. E219 contributes to the Mg(2+) binding site.

It belongs to the cytochrome c oxidase subunit 2 family. As to quaternary structure, component of the cytochrome c oxidase (complex IV, CIV), a multisubunit enzyme composed of a catalytic core of 3 subunits and several supernumerary subunits. The complex exists as a monomer or a dimer and forms supercomplexes (SCs) in the inner mitochondrial membrane with ubiquinol-cytochrome c oxidoreductase (cytochrome b-c1 complex, complex III, CIII). It depends on Cu cation as a cofactor.

It is found in the mitochondrion inner membrane. It carries out the reaction 4 Fe(II)-[cytochrome c] + O2 + 8 H(+)(in) = 4 Fe(III)-[cytochrome c] + 2 H2O + 4 H(+)(out). Its function is as follows. Component of the cytochrome c oxidase, the last enzyme in the mitochondrial electron transport chain which drives oxidative phosphorylation. The respiratory chain contains 3 multisubunit complexes succinate dehydrogenase (complex II, CII), ubiquinol-cytochrome c oxidoreductase (cytochrome b-c1 complex, complex III, CIII) and cytochrome c oxidase (complex IV, CIV), that cooperate to transfer electrons derived from NADH and succinate to molecular oxygen, creating an electrochemical gradient over the inner membrane that drives transmembrane transport and the ATP synthase. Cytochrome c oxidase is the component of the respiratory chain that catalyzes the reduction of oxygen to water. Electrons originating from reduced cytochrome c in the intermembrane space (IMS) are transferred via the dinuclear copper A center (CU(A)) of subunit 2 and heme A of subunit 1 to the active site in subunit 1, a binuclear center (BNC) formed by heme A3 and copper B (CU(B)). The BNC reduces molecular oxygen to 2 water molecules using 4 electrons from cytochrome c in the IMS and 4 protons from the mitochondrial matrix. This Zancudomyces culisetae (Gut fungus) protein is Cytochrome c oxidase subunit 2.